A 339-amino-acid chain; its full sequence is Ketol-acid reductoisomerase (NADP(+)) (339 aa).

The 182-residue stretch at 1 to 182 (MRVYYDRDAD…GGGRSGVIET (182 aa)) folds into the KARI N-terminal Rossmann domain. NADP(+) is bound by residues 24–27 (YGSQ), Arg48, Ser51, Thr53, and 83–86 (DELQ). Residue His108 is part of the active site. Gly134 contacts NADP(+). A KARI C-terminal knotted domain is found at 183–328 (TFKEECETDL…GKLRAMMPWI (146 aa)). Mg(2+) contacts are provided by Asp191, Glu195, Glu227, and Glu231. Residue Ser252 coordinates substrate.

Belongs to the ketol-acid reductoisomerase family. Mg(2+) is required as a cofactor.

It catalyses the reaction (2R)-2,3-dihydroxy-3-methylbutanoate + NADP(+) = (2S)-2-acetolactate + NADPH + H(+). The catalysed reaction is (2R,3R)-2,3-dihydroxy-3-methylpentanoate + NADP(+) = (S)-2-ethyl-2-hydroxy-3-oxobutanoate + NADPH + H(+). Its pathway is amino-acid biosynthesis; L-isoleucine biosynthesis; L-isoleucine from 2-oxobutanoate: step 2/4. The protein operates within amino-acid biosynthesis; L-valine biosynthesis; L-valine from pyruvate: step 2/4. In terms of biological role, involved in the biosynthesis of branched-chain amino acids (BCAA). Catalyzes an alkyl-migration followed by a ketol-acid reduction of (S)-2-acetolactate (S2AL) to yield (R)-2,3-dihydroxy-isovalerate. In the isomerase reaction, S2AL is rearranged via a Mg-dependent methyl migration to produce 3-hydroxy-3-methyl-2-ketobutyrate (HMKB). In the reductase reaction, this 2-ketoacid undergoes a metal-dependent reduction by NADPH to yield (R)-2,3-dihydroxy-isovalerate. The sequence is that of Ketol-acid reductoisomerase (NADP(+)) from Brucella suis (strain ATCC 23445 / NCTC 10510).